The sequence spans 218 residues: Ribosomal RNA small subunit methyltransferase G (218 aa).

S-adenosyl-L-methionine is bound by residues G82, L87, 137–138 (VE), and R152.

The protein belongs to the methyltransferase superfamily. RNA methyltransferase RsmG family.

The protein resides in the cytoplasm. The enzyme catalyses guanosine(527) in 16S rRNA + S-adenosyl-L-methionine = N(7)-methylguanosine(527) in 16S rRNA + S-adenosyl-L-homocysteine. Specifically methylates the N7 position of guanine in position 527 of 16S rRNA. This chain is Ribosomal RNA small subunit methyltransferase G, found in Herminiimonas arsenicoxydans.